The primary structure comprises 558 residues: MDVLSILLILVAVGVGIFVGRQFLGQKQAPAPTYQPVPSPQILEEAKSKAEEIIKEAKEKAEVILKEAKESAEKIVREAEEKAEKLIREAKEEVERIKEEVERRKKELKEREENVLAKERHLDRRWEALEKREEELLHRERELKDFERSLERWRDEIRHKEEELKHMKEEVEELKKKELEELQRIAKLTLEEARQEIIKKVEEEAKKDAVKLMKVIEEDAKRRAEFEAKKIIATATQRLAPQIAVNYTTTTVELPSNEFKGRIIGREGRNIRTFEILTGVDLIIDDTPDIVTISSFDPLRREIAKEALQRLIADGRIHPARIEEVVDEVKREFDEKIRKIGEETVYELDLHDINPGLYYYIGKLYFRTSYSQNVLLHSKEVAYIAGLMAEELGLDAKLARRAGLLHDIGKAISHELGGSHTDIGVELARKYGEPDAVINAIRAHHEEEPVRYPEVALVCAADALSAARPGARRETLEAYIRRLEKLEEIVKSFKGVANAYAVQAGREVRVIVNPEEISDEEAYLLSKEIPKKIEEELDFPGQIKVVVIRETRHVEYAK.

The helical transmembrane segment at 3–23 (VLSILLILVAVGVGIFVGRQF) threads the bilayer. Residues 248-311 (TTTTVELPSN…EIAKEALQRL (64 aa)) enclose the KH domain. In terms of domain architecture, HD spans 374–467 (VLLHSKEVAY…VCAADALSAA (94 aa)).

It belongs to the RNase Y family.

Its subcellular location is the cell membrane. In terms of biological role, endoribonuclease that initiates mRNA decay. The sequence is that of Ribonuclease Y from Aquifex aeolicus (strain VF5).